Reading from the N-terminus, the 655-residue chain is MSASHFREQLALCITLAVLAAASGDYRANMFLNGQYQNGIKDQKENNLLVNPSTNVFLNHAIISRQASPFQGPTYLPPKEFLKCAPGQQCVRSGQCLNGYFAQQLPKIQNCDPETTVCCTYRPPPTTTTTTTTSVPVANCAYDSDCVTPDNCRNGEISAINYVKKQGPNRCPAPNICCRIPSTTLTEDGYIFNLPEKTFPLPTKPAVLAMPSTQAPFRPQPTTAVPASRPTIEYLPPSTTQHPSYEKVQTSRRPVYLPPSPATESASSLIPKIRPRPEPRPQPTRRPTNEYLPPAAANEIPRFEPDRAPQPSNQKPIYRGEDQLSPQIFPTPQPANVPKHFAKCASALVCTSENFCNAIGVLSETPVELSPMEAAFRVPLTDCLQTENGSPGKCCRDPNYVDPWPVNLAGVCATRNKRTKPTGVKDLDANFAEIPWQAMILRESSKTLICGGAIIGDQFVLSSASCVNGLPVTDIRVKAGEWELGSTNEPLPFQLTGVKTVDVHPDYDPSTNSHDLAIIRLERRLEFASHIQPICISDEDPKDSEQCFTSGWGKQALSIHEEGALMHVTDTLPQARSECSADSSSVCSATKFDSCQFDVGSALACGSGSSVRLKGIFAGENSCGEGQTVRFAKPDIKWINTAFAENNKPLLLKRF.

Positions 1 to 24 (MSASHFREQLALCITLAVLAAASG) are cleaved as a signal peptide. Polar residues-rich tracts occupy residues 213–225 (TQAP…TTAV) and 237–252 (PSTT…QTSR). A disordered region spans residues 213–319 (TQAPFRPQPT…QPSNQKPIYR (107 aa)). The interval 343–407 (KCASALVCTS…PNYVDPWPVN (65 aa)) is CLIP. Disulfide bonds link Cys-344–Cys-394, Cys-350–Cys-383, Cys-356–Cys-395, Cys-450–Cys-466, Cys-547–Cys-605, Cys-579–Cys-587, and Cys-595–Cys-623. The 224-residue stretch at 421–644 (PTGVKDLDAN…DIKWINTAFA (224 aa)) folds into the Peptidase S1 domain.

It belongs to the peptidase S1 family.

The protein resides in the secreted. Inactive serine protease that plays a role in germ-band retraction and dorsal closure morphogenesis in embryogenesis; contributes to amnioserosa attachment and epithelial apico-basal polarity by regulating the localization of laminin LanA on the apical side of the amnioserosa epithelium. Contributes to epithelial morphogenesis probably by regulating the bsk/JNK pathway, as part of a negative-feedback loop, and by modulating the cross-talk between the Egfr, bsk/JNK and dpp signal transduction pathways. In larval development, antagonizes the morphogenetic movements controlled by the bsk/JNK signaling including male genitalia formation and thorax development. The chain is Inactive serine protease scarface from Drosophila melanogaster (Fruit fly).